The chain runs to 481 residues: Aspartyl/glutamyl-tRNA(Asn/Gln) amidotransferase subunit B (481 aa).

This sequence belongs to the GatB/GatE family. GatB subfamily. In terms of assembly, heterotrimer of A, B and C subunits.

It carries out the reaction L-glutamyl-tRNA(Gln) + L-glutamine + ATP + H2O = L-glutaminyl-tRNA(Gln) + L-glutamate + ADP + phosphate + H(+). The catalysed reaction is L-aspartyl-tRNA(Asn) + L-glutamine + ATP + H2O = L-asparaginyl-tRNA(Asn) + L-glutamate + ADP + phosphate + 2 H(+). Its function is as follows. Allows the formation of correctly charged Asn-tRNA(Asn) or Gln-tRNA(Gln) through the transamidation of misacylated Asp-tRNA(Asn) or Glu-tRNA(Gln) in organisms which lack either or both of asparaginyl-tRNA or glutaminyl-tRNA synthetases. The reaction takes place in the presence of glutamine and ATP through an activated phospho-Asp-tRNA(Asn) or phospho-Glu-tRNA(Gln). The protein is Aspartyl/glutamyl-tRNA(Asn/Gln) amidotransferase subunit B of Teredinibacter turnerae (strain ATCC 39867 / T7901).